The sequence spans 290 residues: Arylamine N-acetyltransferase, pineal gland isozyme NAT-3 (290 aa).

Cysteine 68 functions as the Acyl-thioester intermediate in the catalytic mechanism. Catalysis depends on residues histidine 107 and aspartate 122.

It belongs to the arylamine N-acetyltransferase family.

It carries out the reaction an arylamine + acetyl-CoA = an N-acetylarylamine + CoA. The catalysed reaction is an N-hydroxyarylamine + acetyl-CoA = an N-acetoxyarylamine + CoA. In terms of biological role, catalyzes the N- or O-acetylation of various arylamine and heterocyclic amine substrates, and participates in the detoxification of a plethora of hydrazine and arylamine drugs. In Gallus gallus (Chicken), this protein is Arylamine N-acetyltransferase, pineal gland isozyme NAT-3.